The chain runs to 507 residues: Sperm-associated antigen 6 (507 aa).

8 ARM repeats span residues 31–70, 73–112, 115–154, 157–196, 199–238, 241–280, 325–365, and 402–441; these read PQNIETLQNAGVMSLLRPLLLDVVPTIQQTAALALGRLAN, DDLAEAVVKGDILPQLVYSLAEQNRFYKKAAAFVLRAVGK, PQLAQAIVDCGALDTLVICLEDFDPGVKEAAAWALGYIAR, TELSQAVVDAGAIPLLVLCIQEPEIALKRIAASALSDISK, PELAQTVVDAGAIAHLAQMILNPDAKLKRQVLSALSQIAK, VDLAEMVVEAEIFPVVLTCLKDKDEYVKKNACTLIREIAK, ENLA…QLGR, and KAIKNILQKCTYLPALEPFLYDAPPNILKHVVGQFSKVLP.

As to quaternary structure, interacts with SPAG16 and SPAG17. Highly expressed in testis. Not detected in prostate, ovary, spleen, thymus, small intestine, colon and peripheral blood leukocytes.

It is found in the cytoplasm. It localises to the cytoskeleton. The protein resides in the cell projection. The protein localises to the cilium. Its subcellular location is the flagellum. It is found in the cilium axoneme. Its function is as follows. Important for structural integrity of the central apparatus in the sperm tail and for flagellar motility. The polypeptide is Sperm-associated antigen 6 (Spag6) (Mus musculus (Mouse)).